The primary structure comprises 147 residues: Cyanate hydratase (147 aa).

Active-site residues include arginine 88, glutamate 91, and serine 114.

The protein belongs to the cyanase family.

It carries out the reaction cyanate + hydrogencarbonate + 3 H(+) = NH4(+) + 2 CO2. In terms of biological role, catalyzes the reaction of cyanate with bicarbonate to produce ammonia and carbon dioxide. In Methylobacillus flagellatus (strain ATCC 51484 / DSM 6875 / VKM B-1610 / KT), this protein is Cyanate hydratase.